A 133-amino-acid chain; its full sequence is Homeobox protein HD-5 (133 aa).

The homeobox DNA-binding region spans 34–93 (SKRSRLKLSGQQIDVLESNFKIDSHPNSATKSLLSNALSIPLKNIQIWFQNRRAKEKTAR). The tract at residues 86 to 109 (RAKEKTARDGGRRRSGNAEIEDGE) is disordered.

The protein localises to the nucleus. In Encephalitozoon cuniculi (strain GB-M1) (Microsporidian parasite), this protein is Homeobox protein HD-5 (HD-5).